Consider the following 341-residue polypeptide: Dual oxidase maturation factor 1 (341 aa).

The Extracellular segment spans residues 1-24; sequence MAALGHTLPFYTGTKPTFPMDTTL. The chain crosses the membrane as a helical span at residues 25 to 45; it reads AVIITIFLTALVTFIIILPGI. The Cytoplasmic portion of the chain corresponds to 46–51; the sequence is RGKTRL. Residues 52–72 form a helical membrane-spanning segment; that stretch reads FWLLRVVTSLFIGAVILAVNF. Topologically, residues 73–183 are extracellular; the sequence is SSEWSVGHVN…RLAGHYASAM (111 aa). 3 N-linked (GlcNAc...) asparagine glycosylation sites follow: asparagine 84, asparagine 109, and asparagine 121. The helical transmembrane segment at 184-204 threads the bilayer; it reads LWVAFLCWLLANVMLSMPVLV. Residue tyrosine 205 is a topological domain, cytoplasmic. Residues 206–226 traverse the membrane as a helical segment; sequence GGHMLLATGLFQLLALFFFSM. The Extracellular portion of the chain corresponds to 227 to 249; sequence TTSLISPCPLRLGTAVLHTHHGP. Residues 250-270 traverse the membrane as a helical segment; that stretch reads AFWITLATGLLCILLGLVMAV. The Cytoplasmic portion of the chain corresponds to 271 to 341; it reads AHRMQPHRLK…EHPKESDCSL (71 aa).

It belongs to the DUOXA family. As to quaternary structure, may interact with NUMB.

It is found in the membrane. Its function is as follows. May be required for the maturation and the transport from the endoplasmic reticulum to the plasma membrane of functional DUOX1. In Mus musculus (Mouse), this protein is Dual oxidase maturation factor 1 (Duoxa1).